Consider the following 89-residue polypeptide: Dynein light chain 1, cytoplasmic (89 aa).

Lys-36 bears the N6-acetyllysine mark. Lys-43 participates in a covalent cross-link: Glycyl lysine isopeptide (Lys-Gly) (interchain with G-Cter in SUMO2). The interaction with ESR1 stretch occupies residues 67–89 (THETKHFIYFYLGQVAILLFKSG). Ser-88 is subject to Phosphoserine.

It belongs to the dynein light chain family. Homodimer. Monomer; the monomeric form is incapable of binding to target proteins. The cytoplasmic dynein 1 complex consists of two catalytic heavy chains (HCs) and a number of non-catalytic subunits presented by intermediate chains (ICs), light intermediate chains (LICs) and light chains (LCs); the composition seems to vary in respect to the IC, LIC and LC composition. The heavy chain homodimer serves as a scaffold for the probable homodimeric assembly of the respective non-catalytic subunits. The ICs and LICs bind directly to the HC dimer and the LCs assemble on the IC dimer. Interacts with TXNDC17. Interacts with WWC1 and ESR1. The WWC1-DYNLL1 interaction is mandatory for the recruitment and transactivation functions of ESR1 or DYNLL1 to the target chromatin. Interacts with BCL2L11. Interacts with BCL2; the interaction is greatly enhanced in the nucleus and in mitochondria upon induction of apoptosis. Interacts with PAK1; the interaction requires dimeric DYNLL1. Interacts with MYZAP. Part of an astrin (SPAG5)-kinastrin (SKAP) complex containing KNSTRN, SPAG5, PLK1, DYNLL1 and SGO2. Interacts with ATMIN; this interaction inhibits ATMIN transcriptional activity and hence may play a role in a feedback loop whereby DYNLL1 inhibits transactivation of its own promoter by ATMIN. Interacts with NEK9 (not phosphorylated at 'Ser-944'). Interacts with BICD2. Interacts with BCAS1. Interacts with Basson/BSN. Interacts with HDAC6. Interacts with TPPP. Interacts with AMBRA1 (via TQT motifs); tethering AMBRA1 to the cytoskeleton. Interacts with FAM83D/CHICA (via C-terminus). Interacts with HMMR, SPAG5/Astrin and KNSTRN/Kinastrin. Interacts with TLK2. Interacts with NOS1. Interacts with WWC1, WWC2 and WWC3. Interacts with MRE11; inhibiting MRE11 homodimerization and activity. In terms of assembly, (Microbial infection) Interacts with bovine immunodeficiency virus Gag protein; this interaction is critical for intracellular microtubule-dependent viral genome transport. In terms of processing, phosphorylation at Ser-88 promotes recruitment to DNA double-strand breaks (DSBs) by TP53BP1 and ability to inhibit MRE11.

It is found in the cytoplasm. The protein localises to the cytoskeleton. It localises to the microtubule organizing center. The protein resides in the centrosome. Its subcellular location is the chromosome. It is found in the nucleus. The protein localises to the mitochondrion. Its function is as follows. Acts as one of several non-catalytic accessory components of the cytoplasmic dynein 1 complex that are thought to be involved in linking dynein to cargos and to adapter proteins that regulate dynein function. Cytoplasmic dynein 1 acts as a motor for the intracellular retrograde motility of vesicles and organelles along microtubules. May play a role in changing or maintaining the spatial distribution of cytoskeletal structures. In addition to its role in cytoskeleton and transport, acts as a protein-protein adapter, which inhibits and/or sequesters target proteins. Involved in the response to DNA damage by acting as a key regulator of DNA end resection: when phosphorylated at Ser-88, recruited to DNA double-strand breaks (DSBs) by TP53BP1 and acts by disrupting MRE11 dimerization, thereby inhibiting DNA end resection. In a subset of DSBs, DYNLL1 remains unphosphorylated and promotes the recruitment of the Shieldin complex. Binds and inhibits the catalytic activity of neuronal nitric oxide synthase/NOS1. Promotes transactivation functions of ESR1 and plays a role in the nuclear localization of ESR1. Regulates apoptotic activities of BCL2L11 by sequestering it to microtubules. Upon apoptotic stimuli the BCL2L11-DYNLL1 complex dissociates from cytoplasmic dynein and translocates to mitochondria and sequesters BCL2 thus neutralizing its antiapoptotic activity. In Bos taurus (Bovine), this protein is Dynein light chain 1, cytoplasmic (DYNLL1).